A 343-amino-acid polypeptide reads, in one-letter code: Dimethyladenosine transferase 1, mitochondrial (343 aa).

S-adenosyl-L-methionine-binding positions include 28 to 31 (QNFL), N29, L31, G56, E78, D133, and N169.

This sequence belongs to the class I-like SAM-binding methyltransferase superfamily. rRNA adenine N(6)-methyltransferase family. KsgA subfamily.

The protein resides in the mitochondrion. Its function is as follows. Probable S-adenosyl-L-methionine-dependent methyltransferase which specifically dimethylates mitochondrial 12S rRNA at the conserved stem loop. Also required for basal transcription of mitochondrial DNA. Stimulates transcription independently of the methyltransferase activity. The protein is Dimethyladenosine transferase 1, mitochondrial of Vermamoeba vermiformis (Amoeba).